Reading from the N-terminus, the 369-residue chain is Anhydro-N-acetylmuramic acid kinase (369 aa).

12-19 (GTSLDGVD) is a binding site for ATP.

Belongs to the anhydro-N-acetylmuramic acid kinase family.

It catalyses the reaction 1,6-anhydro-N-acetyl-beta-muramate + ATP + H2O = N-acetyl-D-muramate 6-phosphate + ADP + H(+). It participates in amino-sugar metabolism; 1,6-anhydro-N-acetylmuramate degradation. The protein operates within cell wall biogenesis; peptidoglycan recycling. Its function is as follows. Catalyzes the specific phosphorylation of 1,6-anhydro-N-acetylmuramic acid (anhMurNAc) with the simultaneous cleavage of the 1,6-anhydro ring, generating MurNAc-6-P. Is required for the utilization of anhMurNAc either imported from the medium or derived from its own cell wall murein, and thus plays a role in cell wall recycling. The protein is Anhydro-N-acetylmuramic acid kinase of Escherichia coli (strain K12 / MC4100 / BW2952).